We begin with the raw amino-acid sequence, 406 residues long: Cysteine desulfurase (406 aa).

Lys226 is modified (N6-(pyridoxal phosphate)lysine). The Cysteine persulfide intermediate role is filled by Cys364.

This sequence belongs to the class-V pyridoxal-phosphate-dependent aminotransferase family. Csd subfamily. As to quaternary structure, homodimer. Interacts with SufE and the SufBCD complex composed of SufB, SufC and SufD. The interaction with SufE is required to mediate the direct transfer of the sulfur atom from the S-sulfanylcysteine. The cofactor is pyridoxal 5'-phosphate.

It localises to the cytoplasm. The catalysed reaction is (sulfur carrier)-H + L-cysteine = (sulfur carrier)-SH + L-alanine. It catalyses the reaction L-selenocysteine + AH2 = hydrogenselenide + L-alanine + A + H(+). It functions in the pathway cofactor biosynthesis; iron-sulfur cluster biosynthesis. In terms of biological role, cysteine desulfurases mobilize the sulfur from L-cysteine to yield L-alanine, an essential step in sulfur metabolism for biosynthesis of a variety of sulfur-containing biomolecules. Component of the suf operon, which is activated and required under specific conditions such as oxidative stress and iron limitation. Acts as a potent selenocysteine lyase in vitro, that mobilizes selenium from L-selenocysteine. Selenocysteine lyase activity is however unsure in vivo. The sequence is that of Cysteine desulfurase from Salmonella gallinarum (strain 287/91 / NCTC 13346).